Here is a 220-residue protein sequence, read N- to C-terminus: 7-cyano-7-deazaguanine synthase (220 aa).

Residue 10-20 (FSGGQDSTTCL) participates in ATP binding. Positions 186, 195, 198, and 201 each coordinate Zn(2+).

This sequence belongs to the QueC family. As to quaternary structure, homodimer. Requires Zn(2+) as cofactor.

It carries out the reaction 7-carboxy-7-deazaguanine + NH4(+) + ATP = 7-cyano-7-deazaguanine + ADP + phosphate + H2O + H(+). Its pathway is purine metabolism; 7-cyano-7-deazaguanine biosynthesis. Catalyzes the ATP-dependent conversion of 7-carboxy-7-deazaguanine (CDG) to 7-cyano-7-deazaguanine (preQ(0)). The sequence is that of 7-cyano-7-deazaguanine synthase from Bacillus thuringiensis (strain Al Hakam).